The chain runs to 838 residues: Probable bifunctional folylpolyglutamate synthase/dihydropteroate synthase (838 aa).

Residues 1–418 (MEYHEAVNFL…LVVGSLYVVA (418 aa)) are folylpolyglutamate synthase. 46-52 (GSNGKGS) contributes to the ATP binding site. Positions 541–561 (AADAGEDDERGAGDASDAGHD) are disordered. A Pterin-binding domain is found at 569–819 (TAVMGILNVT…DVPENVAAVN (251 aa)). A DHPS region spans residues 571–838 (VMGILNVTPN…RFEADAERED (268 aa)). Asn-576 is a binding site for Mg(2+). Residues Thr-616, Asp-649, Asn-668, Asp-738, Lys-774, and 807 to 809 (RVH) each bind (7,8-dihydropterin-6-yl)methyl diphosphate.

It in the N-terminal section; belongs to the folylpolyglutamate synthase family. In the C-terminal section; belongs to the DHPS family. It depends on Mg(2+) as a cofactor.

It catalyses the reaction (6S)-5,6,7,8-tetrahydrofolyl-(gamma-L-Glu)(n) + L-glutamate + ATP = (6S)-5,6,7,8-tetrahydrofolyl-(gamma-L-Glu)(n+1) + ADP + phosphate + H(+). The catalysed reaction is (7,8-dihydropterin-6-yl)methyl diphosphate + 4-aminobenzoate = 7,8-dihydropteroate + diphosphate. Its pathway is cofactor biosynthesis; tetrahydrofolylpolyglutamate biosynthesis. It functions in the pathway cofactor biosynthesis; tetrahydrofolate biosynthesis; 7,8-dihydrofolate from 2-amino-4-hydroxy-6-hydroxymethyl-7,8-dihydropteridine diphosphate and 4-aminobenzoate: step 1/2. In terms of biological role, can complement an H.volcanii mutant strain that is thymidine auxotroph because it lacks the two dihydrofolate reductase genes encoded by hdrA and hdrB. This Haloferax volcanii (strain ATCC 29605 / DSM 3757 / JCM 8879 / NBRC 14742 / NCIMB 2012 / VKM B-1768 / DS2) (Halobacterium volcanii) protein is Probable bifunctional folylpolyglutamate synthase/dihydropteroate synthase (folCP).